The sequence spans 280 residues: Lipase chaperone (280 aa).

A helical transmembrane segment spans residues 5–22; it reads ALTIITIASGSLGAVYFL.

It belongs to the lipase chaperone family.

It is found in the cell inner membrane. Its function is as follows. May be involved in the folding of the extracellular lipase during its passage through the periplasm. This chain is Lipase chaperone (lifO), found in Vibrio vulnificus (strain YJ016).